The following is a 233-amino-acid chain: Tetrahydromethanopterin S-methyltransferase subunit D (233 aa).

The next 6 membrane-spanning stretches (helical) occupy residues 4 to 24 (LLLI…VHFV), 39 to 59 (VGTG…ITAA), 67 to 87 (LMIM…TMLV), 133 to 153 (FVSG…IYWA), 166 to 186 (MGAA…NAVI), and 209 to 229 (GIVA…LLVY).

Belongs to the MtrD family. The complex is composed of 8 subunits; MtrA, MtrB, MtrC, MtrD, MtrE, MtrF, MtrG and MtrH.

The protein resides in the cell membrane. The enzyme catalyses 5-methyl-5,6,7,8-tetrahydromethanopterin + coenzyme M + 2 Na(+)(in) = 5,6,7,8-tetrahydromethanopterin + methyl-coenzyme M + 2 Na(+)(out). It participates in one-carbon metabolism; methanogenesis from CO(2); methyl-coenzyme M from 5,10-methylene-5,6,7,8-tetrahydromethanopterin: step 2/2. Functionally, part of a complex that catalyzes the formation of methyl-coenzyme M and tetrahydromethanopterin from coenzyme M and methyl-tetrahydromethanopterin. This is an energy-conserving, sodium-ion translocating step. The protein is Tetrahydromethanopterin S-methyltransferase subunit D of Methanothermobacter marburgensis (strain ATCC BAA-927 / DSM 2133 / JCM 14651 / NBRC 100331 / OCM 82 / Marburg) (Methanobacterium thermoautotrophicum).